We begin with the raw amino-acid sequence, 179 residues long: Avenin-like a2 (179 aa).

Positions 1–19 (MKTMFLLALLAFTATSAVA) are cleaved as a signal peptide.

Belongs to the prolamin family. Contains 7 disulfide bonds.

Its function is as follows. Seed storage protein. Not integrated in the gluten polymer through disulfide bonds, unless incorporated by reduction and reoxidation during dough making. Increases dough strength and bread volume, but decreases dough stability when added into a base wheat flour. In Triticum aestivum (Wheat), this protein is Avenin-like a2.